The sequence spans 150 residues: Mating pheromone 1 (150 aa).

An N-terminal signal peptide occupies residues 1-16 (MKAIFIILAILMVTQA). A propeptide spanning residues 17 to 52 (FKMTSKVNTKLQSQIQSKFQSKNKLASTFQTSSKLK) is cleaved from the precursor.

The protein resides in the secreted. In terms of biological role, mating ciliate pheromones (or gamones) are diffusible extracellular communication signals that distinguish different intraspecific classes of cells commonly referred to as 'mating types'. They prepare the latter for conjugation by changing their cell surface properties. The polypeptide is Mating pheromone 1 (Euplotoides octocarinatus (Freshwater ciliate)).